A 247-amino-acid chain; its full sequence is Large ribosomal subunit protein uL24m (247 aa).

In terms of domain architecture, KOW spans Phe-84 to Glu-117.

This sequence belongs to the universal ribosomal protein uL24 family. In terms of assembly, component of the mitochondrial ribosome large subunit (39S) which comprises a 16S rRNA and about 50 distinct proteins.

It is found in the mitochondrion. The sequence is that of Large ribosomal subunit protein uL24m (mRpL24) from Drosophila pseudoobscura pseudoobscura (Fruit fly).